Here is a 592-residue protein sequence, read N- to C-terminus: Methionine--tRNA ligase (592 aa).

Residues 12-22 carry the 'HIGH' region motif; that stretch reads PYANGPFHVGH. C144, C147, C157, and C160 together coordinate Zn(2+). A 'KMSKS' region motif is present at residues 342–346; it reads KMSTS. T345 serves as a coordination point for ATP.

Belongs to the class-I aminoacyl-tRNA synthetase family. MetG type 1 subfamily. As to quaternary structure, monomer. Zn(2+) is required as a cofactor.

The protein localises to the cytoplasm. It carries out the reaction tRNA(Met) + L-methionine + ATP = L-methionyl-tRNA(Met) + AMP + diphosphate. In terms of biological role, is required not only for elongation of protein synthesis but also for the initiation of all mRNA translation through initiator tRNA(fMet) aminoacylation. The polypeptide is Methionine--tRNA ligase (Roseiflexus castenholzii (strain DSM 13941 / HLO8)).